The following is a 305-amino-acid chain: Methionyl-tRNA formyltransferase (305 aa).

(6S)-5,6,7,8-tetrahydrofolate is bound at residue 108–111 (SLLP).

Belongs to the Fmt family.

The catalysed reaction is L-methionyl-tRNA(fMet) + (6R)-10-formyltetrahydrofolate = N-formyl-L-methionyl-tRNA(fMet) + (6S)-5,6,7,8-tetrahydrofolate + H(+). Functionally, attaches a formyl group to the free amino group of methionyl-tRNA(fMet). The formyl group appears to play a dual role in the initiator identity of N-formylmethionyl-tRNA by promoting its recognition by IF2 and preventing the misappropriation of this tRNA by the elongation apparatus. This is Methionyl-tRNA formyltransferase from Thermus thermophilus (strain ATCC 27634 / DSM 579 / HB8).